Consider the following 370-residue polypeptide: Dihydroorotate dehydrogenase (quinone) (370 aa).

Residues 67 to 71 (AGFDK) and Thr91 each bind FMN. Lys71 lines the substrate pocket. 116-120 (NRMGF) contributes to the substrate binding site. The FMN site is built by Asn146 and Asn179. Asn179 contributes to the substrate binding site. Catalysis depends on Ser182, which acts as the Nucleophile. Asn184 is a binding site for substrate. Lys222 and Thr250 together coordinate FMN. 251–252 (NT) is a binding site for substrate. FMN is bound by residues Gly276, Gly305, and 326-327 (YS).

The protein belongs to the dihydroorotate dehydrogenase family. Type 2 subfamily. As to quaternary structure, monomer. Requires FMN as cofactor.

It localises to the cell membrane. The catalysed reaction is (S)-dihydroorotate + a quinone = orotate + a quinol. The protein operates within pyrimidine metabolism; UMP biosynthesis via de novo pathway; orotate from (S)-dihydroorotate (quinone route): step 1/1. Catalyzes the conversion of dihydroorotate to orotate with quinone as electron acceptor. The polypeptide is Dihydroorotate dehydrogenase (quinone) (Streptomyces griseus subsp. griseus (strain JCM 4626 / CBS 651.72 / NBRC 13350 / KCC S-0626 / ISP 5235)).